Here is a 262-residue protein sequence, read N- to C-terminus: Alpha/beta-gliadin A-I (262 aa).

The first 20 residues, M1–A20, serve as a signal peptide directing secretion. Disordered regions lie at residues L51–Q73, P87–Q120, and Y225–P251. 2 stretches are compositionally biased toward pro residues: residues P56–S71 and P93–Q104. Over residues P105 to Q120 the composition is skewed to low complexity. Residues F232–P251 are compositionally biased toward polar residues.

The protein belongs to the gliadin/glutenin family. In terms of processing, substrate of transglutaminase.

Its function is as follows. Gliadin is the major seed storage protein in wheat. This is Alpha/beta-gliadin A-I from Triticum aestivum (Wheat).